The following is a 356-amino-acid chain: uncharacterized protein (356 aa).

Transmembrane regions (helical) follow at residues 2–22 (IESI…FHRL), 35–55 (GYVT…PIPF), 76–96 (NMGY…FAFG), 99–119 (LLYG…GPFL), 124–144 (IVAL…LSIF), and 152–172 (EIAF…ITFV). The GGDEF domain occupies 218–353 (ESLALLLIDI…GRNQVMFNPI (136 aa)).

It is found in the cell membrane. This is an uncharacterized protein from Staphylococcus haemolyticus (strain JCSC1435).